The chain runs to 210 residues: Protein PF1979 (210 aa).

The AMMECR1 domain maps to 7–201 (EWGEFLVRLA…EEYPRGPVKR (195 aa)).

In Pyrococcus furiosus (strain ATCC 43587 / DSM 3638 / JCM 8422 / Vc1), this protein is Protein PF1979.